Here is a 335-residue protein sequence, read N- to C-terminus: DNA-directed RNA polymerase subunit alpha (335 aa).

The tract at residues 1–233 is alpha N-terminal domain (alpha-NTD); it reads MTRTANEFLT…QQIAIFVDLQ (233 aa). An alpha C-terminal domain (alpha-CTD) region spans residues 247-335; the sequence is VDPILLRPVD…MDDRFAYRSR (89 aa).

The protein belongs to the RNA polymerase alpha chain family. In terms of assembly, homodimer. The RNAP catalytic core consists of 2 alpha, 1 beta, 1 beta' and 1 omega subunit. When a sigma factor is associated with the core the holoenzyme is formed, which can initiate transcription.

The enzyme catalyses RNA(n) + a ribonucleoside 5'-triphosphate = RNA(n+1) + diphosphate. DNA-dependent RNA polymerase catalyzes the transcription of DNA into RNA using the four ribonucleoside triphosphates as substrates. In Acinetobacter baumannii (strain AB307-0294), this protein is DNA-directed RNA polymerase subunit alpha.